A 637-amino-acid chain; its full sequence is MGRIIGIDLGTTNSCVAVMEGGDPVVIANQEGNRTTPSIVAFTESGERLVGQVAKRQAVTNSENTVYAVKRLIGRKYNSKEVQYDKSISPFKISEAPNGDAQIEVRGRAYSPAEISSMVLVKMKQTAEDYLGEKITDAVITVPAYFNDSQRQATKDAGKIAGLNVLRIINEPTAAALAYGLDKKKDEKIAVFDLGGGTFDISILELGEGVFEVKSTNGDTHLGGEDFDQRIIDYLVSEFKKDQGIDIRSDKMALQRLKEAAEKAKMELSSSMETDINLPFITADASGPKHMNIKLTRARMEALVEELIDRLEGPCRTALKDAGLSPKDIDEVILVGGMTRMPRVQQKVKEIFDREPHKGVNPDEVVAVGAAIQGGVLGGEVKDVLLLDVTPLSLGIETLGGVMTKLIEKNTTIPTRKSQIFSTAADNQPAVSIHVLQGERSMAGDNRTLGRFDLVGIPPAPRGIPQIEVTFDIDANGIVHVSAKDLGTGKEQSIKITASSGLSETEIEKLVREAESHGEEDRKKKELVEARNSADAMAYGVEKNIKEFGDKVDAAEKARIEDAIAKVRKAVEGDDINAIRSAQDELTTASHKLAEAMYAKTSQAGAGPQPGAGPGTGGQGPGKKDEDVVDADFEEVK.

At threonine 198 the chain carries Phosphothreonine; by autocatalysis. The tract at residues 597–637 is disordered; sequence MYAKTSQAGAGPQPGAGPGTGGQGPGKKDEDVVDADFEEVK. Gly residues predominate over residues 608–621; the sequence is PQPGAGPGTGGQGP. Over residues 627–637 the composition is skewed to acidic residues; it reads DVVDADFEEVK.

Belongs to the heat shock protein 70 family.

In terms of biological role, acts as a chaperone. The protein is Chaperone protein DnaK of Syntrophus aciditrophicus (strain SB).